A 481-amino-acid polypeptide reads, in one-letter code: MNTVSDLNNFVATRCAIADISLSDFGRKEIAIAETEMPGLIAIRDEFAAQQPLRGARITGSLHMTIQTAVLIETLEALGAEVQWASCNIFSTQDHAAAAIAANGTPVFAIKGETLEQYWDFTHRIFEWADGGYTNMILDDGGDATLLLHLGARAEKDQACLNNPTSEEETILFAAIKKKLAQDPTWYSTRLEKVKGVTEETTTGVHRLYQMFAKGELKFPAINVNDSVTKSKFDNLYGCRESLVDAIKRATDVMVAGKVAVVCGYGDVGKGSAQALRALSAQVWVTEVDPICALQAAMEGYRVVTMDYAADKADIFVSATGNYHVITHDHMAKMKNQAIVCNIGHFDNEIDVAGIEKYKWEEIKPQVDHVIFPAANGKPEKRIIILAKGRLVNLGCGTGHPSYVMSSSFANQVIAQIELWNAVGTDKYPIGVYTLPKHLDEKVARLQLKTLNAELTVLSDQQASYIGVTKEGPYKADHYRY.

3 residues coordinate substrate: Thr-65, Asp-140, and Glu-200. 201 to 203 (TTT) contributes to the NAD(+) binding site. Residues Lys-230 and Asp-234 each contribute to the substrate site. NAD(+) contacts are provided by residues Asn-235, 264-269 (GYGDVG), Glu-287, Asn-322, 343-345 (IGH), and Asn-393.

Belongs to the adenosylhomocysteinase family. The cofactor is NAD(+).

Its subcellular location is the cytoplasm. It carries out the reaction S-adenosyl-L-homocysteine + H2O = L-homocysteine + adenosine. The protein operates within amino-acid biosynthesis; L-homocysteine biosynthesis; L-homocysteine from S-adenosyl-L-homocysteine: step 1/1. Functionally, may play a key role in the regulation of the intracellular concentration of adenosylhomocysteine. The sequence is that of Adenosylhomocysteinase from Polynucleobacter asymbioticus (strain DSM 18221 / CIP 109841 / QLW-P1DMWA-1) (Polynucleobacter necessarius subsp. asymbioticus).